Consider the following 133-residue polypeptide: Protein msa (133 aa).

Transmembrane regions (helical) follow at residues 3 to 23 (YLIL…AIGL), 27 to 47 (ILAA…ILFF), 55 to 75 (YIFF…VHLM), and 103 to 123 (FGFD…IVLY).

The protein resides in the cell membrane. Accessory element involved in the expression of sarA and several virulence factors. Modulates SarA production and/or function in a strain-dependent manner. Affects the transcription of the accessory gene regulator (agr) and genes encoding virulence factors including alpha toxin (hla) and protein A (spa). This chain is Protein msa (msa), found in Staphylococcus aureus (strain USA300).